A 317-amino-acid polypeptide reads, in one-letter code: Pantothenate kinase (317 aa).

99-106 contacts ATP; it reads GSVSVGKS.

It belongs to the prokaryotic pantothenate kinase family.

It localises to the cytoplasm. It carries out the reaction (R)-pantothenate + ATP = (R)-4'-phosphopantothenate + ADP + H(+). The protein operates within cofactor biosynthesis; coenzyme A biosynthesis; CoA from (R)-pantothenate: step 1/5. The chain is Pantothenate kinase from Mannheimia succiniciproducens (strain KCTC 0769BP / MBEL55E).